The following is a 259-amino-acid chain: 3-oxo-5-alpha-steroid 4-dehydrogenase 1 (259 aa).

5 helical membrane passes run 10 to 30 (LCLLDMLVYLEGFMAFVSIVG), 86 to 106 (VLLAMFLIHYVQRTLVFPVLI), 111 to 131 (PTLLVTFVLAFLFCTFNGYVQ), 146 to 166 (VTHPCFLTGFALWLVGMVINI), and 206 to 226 (WCGFALASWSLQGVVFALFTL).

It belongs to the steroid 5-alpha reductase family. In terms of tissue distribution, liver and prostate (at a low level).

The protein localises to the microsome membrane. Its subcellular location is the endoplasmic reticulum membrane. It carries out the reaction a 3-oxo-5alpha-steroid + NADP(+) = a 3-oxo-Delta(4)-steroid + NADPH + H(+). It catalyses the reaction 5alpha-pregnane-3,20-dione + NADP(+) = progesterone + NADPH + H(+). The catalysed reaction is 17beta-hydroxy-5alpha-androstan-3-one + NADP(+) = testosterone + NADPH + H(+). The enzyme catalyses androst-4-ene-3,17-dione + NADPH + H(+) = 5alpha-androstan-3,17-dione + NADP(+). Functionally, converts testosterone into 5-alpha-dihydrotestosterone and progesterone or corticosterone into their corresponding 5-alpha-3-oxosteroids. It plays a central role in sexual differentiation and androgen physiology. The protein is 3-oxo-5-alpha-steroid 4-dehydrogenase 1 of Rattus norvegicus (Rat).